Consider the following 483-residue polypeptide: uncharacterized protein (483 aa).

A WD repeat occupies 96 to 137 (IQCDQDPLSSISWSPSGELLLWSSFDSKITVWSLNTQKGYLL).

This is an uncharacterized protein from Schizosaccharomyces pombe (strain 972 / ATCC 24843) (Fission yeast).